We begin with the raw amino-acid sequence, 237 residues long: Ribitol-5-phosphate cytidylyltransferase (237 aa).

CTP-binding positions include L7–G10 and G80–T86.

The protein belongs to the IspD/TarI cytidylyltransferase family. TarI subfamily.

The enzyme catalyses D-ribitol 5-phosphate + CTP + H(+) = CDP-L-ribitol + diphosphate. It functions in the pathway cell wall biogenesis; poly(ribitol phosphate) teichoic acid biosynthesis. Catalyzes the transfer of the cytidylyl group of CTP to D-ribitol 5-phosphate. The polypeptide is Ribitol-5-phosphate cytidylyltransferase (Listeria monocytogenes serotype 4b (strain F2365)).